The following is a 311-amino-acid chain: Protoheme IX farnesyltransferase (311 aa).

The next 8 helical transmembrane spans lie at 19–39 (VLAY…VATI), 55–75 (ILAT…LNCV), 101–121 (NAFV…WWQA), 123–143 (LLSG…YTLG), 169–189 (AVTG…FFWT), 221–241 (VTKQ…ALVP), 242–262 (ATGV…LLMA), and 290–310 (VVFC…GSFF).

The protein belongs to the UbiA prenyltransferase family. Protoheme IX farnesyltransferase subfamily.

The protein resides in the cell membrane. It carries out the reaction heme b + (2E,6E)-farnesyl diphosphate + H2O = Fe(II)-heme o + diphosphate. Its pathway is porphyrin-containing compound metabolism; heme O biosynthesis; heme O from protoheme: step 1/1. In terms of biological role, converts heme B (protoheme IX) to heme O by substitution of the vinyl group on carbon 2 of heme B porphyrin ring with a hydroxyethyl farnesyl side group. In Nocardia farcinica (strain IFM 10152), this protein is Protoheme IX farnesyltransferase.